Reading from the N-terminus, the 158-residue chain is Ribonuclease H (158 aa).

An RNase H type-1 domain is found at 5 to 146 (MRKQIEIFTD…CDQLAKQGAE (142 aa)). 4 residues coordinate Mg(2+): Asp14, Glu52, Asp74, and Asp138.

Belongs to the RNase H family. In terms of assembly, monomer. Mg(2+) serves as cofactor.

Its subcellular location is the cytoplasm. The enzyme catalyses Endonucleolytic cleavage to 5'-phosphomonoester.. Functionally, endonuclease that specifically degrades the RNA of RNA-DNA hybrids. This is Ribonuclease H from Mannheimia succiniciproducens (strain KCTC 0769BP / MBEL55E).